Consider the following 239-residue polypeptide: Ribonuclease PH (239 aa).

Residues arginine 86 and glycine 124–arginine 126 each bind phosphate.

This sequence belongs to the RNase PH family. As to quaternary structure, homohexameric ring arranged as a trimer of dimers.

It catalyses the reaction tRNA(n+1) + phosphate = tRNA(n) + a ribonucleoside 5'-diphosphate. In terms of biological role, phosphorolytic 3'-5' exoribonuclease that plays an important role in tRNA 3'-end maturation. Removes nucleotide residues following the 3'-CCA terminus of tRNAs; can also add nucleotides to the ends of RNA molecules by using nucleoside diphosphates as substrates, but this may not be physiologically important. Probably plays a role in initiation of 16S rRNA degradation (leading to ribosome degradation) during starvation. The protein is Ribonuclease PH of Sinorhizobium fredii (strain NBRC 101917 / NGR234).